Consider the following 290-residue polypeptide: UPF0507 protein YML003W (290 aa).

It belongs to the UPF0507 family.

The protein is UPF0507 protein YML003W of Saccharomyces cerevisiae (strain ATCC 204508 / S288c) (Baker's yeast).